A 63-amino-acid polypeptide reads, in one-letter code: Bowman-Birk type proteinase inhibitor (63 aa).

Disulfide bonds link C8–C61, C9–C24, C12–C57, C14–C22, C31–C38, C35–C50, and C40–C48.

The protein belongs to the Bowman-Birk serine protease inhibitor family.

Its function is as follows. This inhibitor has two domains, each with separate antiprotease activity. Inhibits bovine trypsin and chymotrypsin, in a molar ratio of 1:1. The trypsin inhibition of FBI is independent of chymotrypsin inhibition, but the chymotrypsin inhibition is not completely independent of trypsin inhibition. In Vicia faba (Broad bean), this protein is Bowman-Birk type proteinase inhibitor.